The chain runs to 283 residues: uncharacterized protein (283 aa).

Polar residues predominate over residues 1-10 (MELNKTSESL). Disordered stretches follow at residues 1 to 99 (MELN…NPTS) and 255 to 283 (DQEG…EAHI). Composition is skewed to basic and acidic residues over residues 14 to 34 (KIDH…REVR), 42 to 53 (SSTRQEKADRMP), and 61 to 71 (ESSKGSEEGAV).

It belongs to the chlamydial CPn_0705/CT_671/TC_0042 family.

This is an uncharacterized protein from Chlamydia trachomatis serovar D (strain ATCC VR-885 / DSM 19411 / UW-3/Cx).